We begin with the raw amino-acid sequence, 353 residues long: Homeobox protein Mohawk (353 aa).

Over residues 18-27 (RGTPDRERGS) the composition is skewed to basic and acidic residues. Residues 18 to 50 (RGTPDRERGSRTFSGFLDNPHTGPEVGIPDGPP) form a disordered region. The homeobox; TALE-type DNA-binding region spans 71-132 (VRHKRQALQD…NARRRLKNTV (62 aa)). 2 disordered regions span residues 157–183 (LSVSSDGDSCSEDGENPPRNHMNEEGY) and 243–302 (MGKT…PSKD).

Belongs to the TALE/IRO homeobox family.

It localises to the nucleus. May act as a morphogenetic regulator of cell adhesion. Participates in the early events that lead to differentiation. This Mus musculus (Mouse) protein is Homeobox protein Mohawk (Mkx).